A 106-amino-acid chain; its full sequence is L-rhamnose mutarotase (106 aa).

Tyrosine 20 provides a ligand contact to substrate. Residue histidine 24 is the Proton donor of the active site. Residues tyrosine 43 and tryptophan 78 to tryptophan 79 each bind substrate.

Belongs to the rhamnose mutarotase family. Homodimer.

The protein localises to the cytoplasm. It catalyses the reaction alpha-L-rhamnose = beta-L-rhamnose. It functions in the pathway carbohydrate metabolism; L-rhamnose metabolism. Functionally, involved in the anomeric conversion of L-rhamnose. In Leptothrix cholodnii (strain ATCC 51168 / LMG 8142 / SP-6) (Leptothrix discophora (strain SP-6)), this protein is L-rhamnose mutarotase.